A 101-amino-acid chain; its full sequence is Small ribosomal subunit protein uS14 (101 aa).

It belongs to the universal ribosomal protein uS14 family. In terms of assembly, part of the 30S ribosomal subunit. Contacts proteins S3 and S10.

In terms of biological role, binds 16S rRNA, required for the assembly of 30S particles and may also be responsible for determining the conformation of the 16S rRNA at the A site. This Alcanivorax borkumensis (strain ATCC 700651 / DSM 11573 / NCIMB 13689 / SK2) protein is Small ribosomal subunit protein uS14.